Here is a 541-residue protein sequence, read N- to C-terminus: Putative nucleobase-ascorbate transporter 10 (541 aa).

Transmembrane regions (helical) follow at residues 52-72, 79-99, 101-121, 141-161, 173-193, 196-216, 235-255, 299-319, 376-396, 397-417, 433-453, and 476-496; these read LLSLGITVLIPSVLVPLMGGG, VIQTLLFVSGLTTLFQSFFGT, LPVIAVASYAYIIPITSIIYS, IQGALIITGCFQVLICILGVW, IAPLATFTGLGLYHIGFPLLA, VEVGLPGLILLIFVTQYLPRF, GMILCIPLVWLFAQLLTSSGV, SFAMMAASFVTLFESTGLFYA, RVIQISAAFMIFFSIFGKFGA, FFASIPLPIMASLYCIVLCFV, FNIKFILGFSFFMAISIPQYF, and VIFMSHTTVAAIIAIVLDCTL.

Belongs to the nucleobase:cation symporter-2 (NCS2) (TC 2.A.40) family.

The protein resides in the membrane. This chain is Putative nucleobase-ascorbate transporter 10 (NAT10), found in Arabidopsis thaliana (Mouse-ear cress).